The following is a 402-amino-acid chain: Putative cytochrome P450 123 (402 aa).

Heme is bound at residue Cys350.

It belongs to the cytochrome P450 family. Requires heme as cofactor.

In Mycobacterium bovis (strain ATCC BAA-935 / AF2122/97), this protein is Putative cytochrome P450 123 (cyp123).